The sequence spans 126 residues: Lymphocyte antigen 6 complex locus protein G6c (126 aa).

A signal peptide spans 1-19 (MKHLLLLTLSALLYCWVSA). The 92-residue stretch at 21-112 (TRCHSCYKVP…PRPTPALALI (92 aa)) folds into the UPAR/Ly6 domain. 3 disulfides stabilise this stretch: cysteine 23–cysteine 48, cysteine 26–cysteine 34, and cysteine 40–cysteine 66. Asparagine 89 carries N-linked (GlcNAc...) (high mannose) asparagine glycosylation. A disulfide bridge connects residues cysteine 93 and cysteine 98. A lipid anchor (GPI-anchor amidated serine) is attached at serine 100. Positions 101–126 (PAPRPTPALALISLTSLAGLGLWLLH) are cleaved as a propeptide — removed in mature form.

As to quaternary structure, monomer. Post-translationally, N-glycosylated. Highly expressed at the leading edges of cells, on filopodia.

It localises to the cell membrane. In Mus musculus (Mouse), this protein is Lymphocyte antigen 6 complex locus protein G6c (Ly6g6c).